Here is a 367-residue protein sequence, read N- to C-terminus: 3-isopropylmalate dehydrogenase (367 aa).

An NAD(+)-binding site is contributed by 77-90 (GPKWDAVPYEVRPE). Substrate-binding residues include Arg97, Arg107, Arg135, and Asp226. Mg(2+) is bound by residues Asp226, Asp250, and Asp254. An NAD(+)-binding site is contributed by 290-302 (GSAPDIAGKGIAN).

The protein belongs to the isocitrate and isopropylmalate dehydrogenases family. LeuB type 1 subfamily. Homodimer. Mg(2+) serves as cofactor. Mn(2+) is required as a cofactor.

It localises to the cytoplasm. It catalyses the reaction (2R,3S)-3-isopropylmalate + NAD(+) = 4-methyl-2-oxopentanoate + CO2 + NADH. Its pathway is amino-acid biosynthesis; L-leucine biosynthesis; L-leucine from 3-methyl-2-oxobutanoate: step 3/4. Functionally, catalyzes the oxidation of 3-carboxy-2-hydroxy-4-methylpentanoate (3-isopropylmalate) to 3-carboxy-4-methyl-2-oxopentanoate. The product decarboxylates to 4-methyl-2 oxopentanoate. This chain is 3-isopropylmalate dehydrogenase, found in Mesorhizobium japonicum (strain LMG 29417 / CECT 9101 / MAFF 303099) (Mesorhizobium loti (strain MAFF 303099)).